The sequence spans 585 residues: uncharacterized protein (585 aa).

This sequence to E.coli YejM.

This is an uncharacterized protein from Haemophilus influenzae (strain ATCC 51907 / DSM 11121 / KW20 / Rd).